Here is a 360-residue protein sequence, read N- to C-terminus: Photosystem II protein D1 (360 aa).

Helical transmembrane passes span 29 to 46, 118 to 133, and 142 to 156; these read YIGWFGVLMIPTLLTATT, HFLLGVASYMGREWEL, and WIFVAFSAPVAAASA. His118 contributes to the chlorophyll a binding site. Tyr126 serves as a coordination point for pheophytin a. Residues Asp170 and Glu189 each contribute to the [CaMn4O5] cluster site. The chain crosses the membrane as a helical span at residues 197–218; that stretch reads FHMAGVAGVFGGSLFSAMHGSL. His198 lines the chlorophyll a pocket. A quinone contacts are provided by residues His215 and 264 to 265; that span reads SF. Residue His215 coordinates Fe cation. His272 contacts Fe cation. A helical transmembrane segment spans residues 274–288; sequence FLAAWPVVRIWLTAL. 4 residues coordinate [CaMn4O5] cluster: His332, Glu333, Asp342, and Ala344. Residues 345–360 constitute a propeptide that is removed on maturation; sequence AGEVLPVAVSAPAVHA.

The protein belongs to the reaction center PufL/M/PsbA/D family. In terms of assembly, PSII is composed of 1 copy each of membrane proteins PsbA, PsbB, PsbC, PsbD, PsbE, PsbF, PsbH, PsbI, PsbJ, PsbK, PsbL, PsbM, PsbT, PsbX, PsbY, PsbZ, Psb30/Ycf12, at least 3 peripheral proteins of the oxygen-evolving complex and a large number of cofactors. It forms dimeric complexes. The D1/D2 heterodimer binds P680, chlorophylls that are the primary electron donor of PSII, and subsequent electron acceptors. It shares a non-heme iron and each subunit binds pheophytin, quinone, additional chlorophylls, carotenoids and lipids. D1 provides most of the ligands for the Mn4-Ca-O5 cluster of the oxygen-evolving complex (OEC). There is also a Cl(-1) ion associated with D1 and D2, which is required for oxygen evolution. The PSII complex binds additional chlorophylls, carotenoids and specific lipids. serves as cofactor. Tyr-161 forms a radical intermediate that is referred to as redox-active TyrZ, YZ or Y-Z. Post-translationally, C-terminally processed by CTPA; processing is essential to allow assembly of the oxygen-evolving complex and thus photosynthetic growth.

The protein localises to the plastid. It localises to the chloroplast thylakoid membrane. The catalysed reaction is 2 a plastoquinone + 4 hnu + 2 H2O = 2 a plastoquinol + O2. In terms of biological role, photosystem II (PSII) is a light-driven water:plastoquinone oxidoreductase that uses light energy to abstract electrons from H(2)O, generating O(2) and a proton gradient subsequently used for ATP formation. It consists of a core antenna complex that captures photons, and an electron transfer chain that converts photonic excitation into a charge separation. The D1/D2 (PsbA/PsbD) reaction center heterodimer binds P680, the primary electron donor of PSII as well as several subsequent electron acceptors. This chain is Photosystem II protein D1, found in Bumilleriopsis filiformis (Yellow-green alga).